Here is a 61-residue protein sequence, read N- to C-terminus: Metallothionein-1 (61 aa).

Met-1 bears the N-acetylmethionine mark. The beta stretch occupies residues 1 to 29 (MDPNCSCSTGGSCTCSSSCGCKNCKCTSC). Residues Cys-5, Cys-7, Cys-13, Cys-15, Cys-19, Cys-21, Cys-24, Cys-26, Cys-29, Cys-33, Cys-34, Cys-36, Cys-37, Cys-41, Cys-44, Cys-48, Cys-50, Cys-57, Cys-59, and Cys-60 each contribute to the a divalent metal cation site. An alpha region spans residues 30–61 (KKSCCSCCPVGCSKCAQGCVCKGASDKCTCCA).

Belongs to the metallothionein superfamily. Type 1 family.

Its function is as follows. Metallothioneins have a high content of cysteine residues that bind various heavy metals; these proteins are transcriptionally regulated by both heavy metals and glucocorticoids. The chain is Metallothionein-1 (Mt1) from Rattus norvegicus (Rat).